The primary structure comprises 1071 residues: DNA-directed RNA polymerase subunit beta (1071 aa).

This sequence belongs to the RNA polymerase beta chain family. In plastids the minimal PEP RNA polymerase catalytic core is composed of four subunits: alpha, beta, beta', and beta''. When a (nuclear-encoded) sigma factor is associated with the core the holoenzyme is formed, which can initiate transcription.

The protein localises to the plastid. Its subcellular location is the chloroplast. It catalyses the reaction RNA(n) + a ribonucleoside 5'-triphosphate = RNA(n+1) + diphosphate. Functionally, DNA-dependent RNA polymerase catalyzes the transcription of DNA into RNA using the four ribonucleoside triphosphates as substrates. This chain is DNA-directed RNA polymerase subunit beta, found in Acorus gramineus (Dwarf sweet flag).